The chain runs to 448 residues: Tumor necrosis factor receptor superfamily member EDAR (448 aa).

The signal sequence occupies residues 1–26 (MAHVGDCTQTPWLPVLVVSLMCSARA). Residues 27 to 187 (EYSNCGENEY…LSGQGHLATA (161 aa)) lie on the Extracellular side of the membrane. 3 TNFR-Cys repeats span residues 30–71 (NCGE…DYGC), 73–113 (PCPA…DAEC), and 115–148 (PCLP…TKEC). Intrachain disulfides connect Cys-31–Cys-44, Cys-47–Cys-60, Cys-50–Cys-71, Cys-74–Cys-87, Cys-93–Cys-113, and Cys-135–Cys-148. The N-linked (GlcNAc...) asparagine glycan is linked to Asn-38. The helical transmembrane segment at 188-208 (LIIAMSTIFIMAIAIVLIIMF) threads the bilayer. At 209–448 (YILKTKPSAP…PPASQPHAAS (240 aa)) the chain is on the cytoplasmic side. The disordered stretch occupies residues 220 to 297 (CCTSHPGKSV…EEPAPDKQGS (78 aa)). Residues 233–243 (VSKDEEKKEAP) show a composition bias toward basic and acidic residues. The segment covering 271-283 (DASSENEQLLSRS) has biased composition (polar residues). The 74-residue stretch at 358-431 (RMLSSTYNSE…DAVESLCADI (74 aa)) folds into the Death domain.

In terms of assembly, binds to EDARADD. Associates with TRAF1, TRAF2, TRAF3 and NIK. Detected in fetal kidney, lung, skin and cultured neonatal epidermal keratinocytes. Not detected in lymphoblast and fibroblast cell lines.

Its subcellular location is the membrane. Its function is as follows. Receptor for EDA isoform A1, but not for EDA isoform A2. Mediates the activation of NF-kappa-B and JNK. May promote caspase-independent cell death. This is Tumor necrosis factor receptor superfamily member EDAR (EDAR) from Homo sapiens (Human).